We begin with the raw amino-acid sequence, 1311 residues long: Sterol regulatory element-binding protein cleavage-activating protein (1311 aa).

The Cytoplasmic portion of the chain corresponds to 1–18; sequence MPLIDKLRERISRAFYSH. A helical membrane pass occupies residues 19 to 39; it reads GLLCASYPIPIIILTALCILA. Over 40–277 the chain is Lumenal; that stretch reads SCYPLLKLPL…HIVHVHFKEE (238 aa). Positions 46–282 are loop-1; that stretch reads KLPLPGTGPV…HFKEEIGIAE (237 aa). Asn-242 and Asn-261 each carry an N-linked (GlcNAc...) asparagine glycan. A helical transmembrane segment spans residues 278-298; that stretch reads IGIAELIPLVTTYIILFAYIY. Residues 282–440 form the SSD domain; that stretch reads ELIPLVTTYI…MFFFTTVLSI (159 aa). Residues 299-310 lie on the Cytoplasmic side of the membrane; it reads FSTRKIDLVKSK. A helical membrane pass occupies residues 311–331; that stretch reads WGLALAAVVTVLSSLLMSVGL. The Lumenal segment spans residues 332–342; sequence CTLFGLTPTLN. Residues 343–363 form a helical membrane-spanning segment; it reads GGEIFPYLVVVIGLENVLVLT. Over 364 to 399 the chain is Cytoplasmic; sequence KSVVSTPVDLEVKLRIAQGLRNESWFIMKNMATELG. Residues 400-420 form a helical membrane-spanning segment; it reads IILIGYFTLVPAIQEFCLFAV. Position 421 (Val-421) is a topological domain, lumenal. A helical membrane pass occupies residues 422-442; that stretch reads GLVSDFFLQMFFFTTVLSIDI. The Cytoplasmic portion of the chain corresponds to 443–512; sequence RRMELADLNK…FFARTRLAQR (70 aa). Positions 445–450 match the ER export signal motif; the sequence is MELADL. Residues 513–533 traverse the membrane as a helical segment; that stretch reads IIMAGTVVWIGILVYTDPAGL. The tract at residues 529-726 is loop-7; the sequence is DPAGLRNYLT…QTPADVTLYK (198 aa). At 534-723 the chain is on the lumenal side; that stretch reads RNYLTVHVTE…TENQTPADVT (190 aa). N-linked (GlcNAc...) asparagine glycans are attached at residues Asn-583 and Asn-651. The helical transmembrane segment at 724-744 threads the bilayer; it reads LYKVAALGLASGIFLVLFFFL. The Cytoplasmic segment spans residues 745–1311; it reads LYRLLCPKNY…YVPSVLEKLD (567 aa). The interaction with srebf stretch occupies residues 747-1311; it reads RLLCPKNYGQ…YVPSVLEKLD (565 aa). WD repeat units follow at residues 790–827, 997–1034, 1037–1076, 1109–1146, 1149–1187, 1190–1227, and 1230–1267; these read GHHM…CLTI, SFES…LRCS, DGQS…NQLQ, AHRK…CLFT, GHSG…RVSH, GHRG…KLYS, and QDLG…LLQT.

It belongs to the WD repeat SCAP family. In terms of assembly, membrane region forms a homotetramer. Component of the SCAP-SREBP complex (composed of SCAP and srebf1/srebp1 or srebf2/srebp2). Forms a ternary complex with insig1 or insig2 through its transmembrane domains at high sterol concentrations. Interacts with the SEC23-SEC24 complex.

The protein localises to the endoplasmic reticulum membrane. The protein resides in the golgi apparatus membrane. It localises to the cytoplasmic vesicle. It is found in the COPII-coated vesicle membrane. Its function is as follows. Escort protein required for cholesterol as well as lipid homeostasis. Regulates export of the SCAP-SREBP complex from the endoplasmic reticulum to the Golgi upon low cholesterol, thereby regulating the processing of sterol regulatory element-binding proteins (SREBPs) SREBF1/SREBP1 and SREBF2/SREBP2. At high sterol concentrations, formation of a ternary complex with INSIG (INSIG1 or INSIG2) leads to mask the ER export signal in SCAP, promoting retention of the complex in the endoplasmic reticulum. Low sterol concentrations trigger release of INSIG, a conformational change in the SSD domain of SCAP, unmasking of the ER export signal, promoting recruitment into COPII-coated vesicles and transport of the SCAP-SREBP to the Golgi: in the Golgi, SREBPs are then processed, releasing the transcription factor fragment of SREBPs from the membrane, its import into the nucleus and up-regulation of LDLR, INSIG1 and the mevalonate pathway. Binds cholesterol via its SSD domain. In Xenopus laevis (African clawed frog), this protein is Sterol regulatory element-binding protein cleavage-activating protein.